We begin with the raw amino-acid sequence, 679 residues long: Glycine--tRNA ligase beta subunit (679 aa).

This sequence belongs to the class-II aminoacyl-tRNA synthetase family. Tetramer of two alpha and two beta subunits.

The protein resides in the cytoplasm. It carries out the reaction tRNA(Gly) + glycine + ATP = glycyl-tRNA(Gly) + AMP + diphosphate. The polypeptide is Glycine--tRNA ligase beta subunit (Streptococcus pyogenes serotype M49 (strain NZ131)).